A 555-amino-acid chain; its full sequence is 3-oxocholest-4-en-26-oate--CoA ligase (555 aa).

Residues 172–180, aspartate 418, arginine 433, and lysine 524 contribute to the ATP site; that span reads TGGTTGHPK. Residues 525–555 are disordered; sequence PDYRWAKDQTGLRPADEVYNNGDGNGAAATG. Positions 544-555 are enriched in low complexity; it reads NNGDGNGAAATG.

Belongs to the ATP-dependent AMP-binding enzyme family.

The catalysed reaction is (25S)-3-oxocholest-4-en-26-oate + ATP + CoA = (25S)-3-oxocholest-4-en-26-oyl-CoA + AMP + diphosphate. It functions in the pathway steroid metabolism; cholesterol metabolism. Its function is as follows. Involved in the degradation of the side chains of C-24 branched-chain sterols. Catalyzes the ATP-dependent CoA thioesterification of the sterol 3-oxocholest-4-en-26-oate to yield 3-oxocholest-4-en-26-oyl-CoA. It can also use beta-sitosterol, campesterol and 3beta-hydroxy-5-cholesten-26-oate. The chain is 3-oxocholest-4-en-26-oate--CoA ligase from Rhodococcus rhodochrous.